A 379-amino-acid polypeptide reads, in one-letter code: Heme chaperone HemW (379 aa).

Residues 1-232 form the Radical SAM core domain; sequence MLQKPNSAYF…MDILAKNGYN (232 aa). Position 9 (tyrosine 9) interacts with S-adenosyl-L-methionine. Positions 15, 19, and 22 each coordinate [4Fe-4S] cluster. Residues glycine 60, 61-62, glutamate 93, glutamine 120, arginine 132, and aspartate 157 each bind S-adenosyl-L-methionine; that span reads GT.

The protein belongs to the anaerobic coproporphyrinogen-III oxidase family. HemW subfamily. As to quaternary structure, homodimer.

It localises to the cytoplasm. Its subcellular location is the cell membrane. Its function is as follows. Could serve in the delivery of heme to a membrane-localized target protein. Binds one molecule of heme per monomer, possibly covalently; heme and Fe-S cluster binding are independent. Incubation with the reductant sodium dithionite increases binding. Does not have coproporphyrinogen III dehydrogenase activity in vitro, does not complement an E.coli hemN deletion in vivo. Binds 1 Fe-S cluster, it is probably [4Fe-4S]. The cluster is coordinated with 3 cysteines and an exchangeable S-adenosyl-L-methionine; only dimeric protein has the cluster. The sequence is that of Heme chaperone HemW from Lactococcus lactis subsp. lactis (strain IL1403) (Streptococcus lactis).